The primary structure comprises 490 residues: Protoporphyrinogen oxidase (490 aa).

FAD contacts are provided by residues 7-12, 32-33, Trp40, 61-64, and 466-468; these read GGGIAG, EK, GPRT, and VSI.

The protein belongs to the protoporphyrinogen/coproporphyrinogen oxidase family. Protoporphyrinogen oxidase subfamily. FAD serves as cofactor.

The protein resides in the mitochondrion. It carries out the reaction protoporphyrinogen IX + 3 O2 = protoporphyrin IX + 3 H2O2. It participates in porphyrin-containing compound metabolism; protoporphyrin-IX biosynthesis; protoporphyrin-IX from protoporphyrinogen-IX: step 1/1. Its function is as follows. Catalyzes the 6-electron oxidation of protoporphyrinogen-IX to form protoporphyrin-IX. The protein is Protoporphyrinogen oxidase (hem14) of Schizosaccharomyces pombe (strain 972 / ATCC 24843) (Fission yeast).